Here is a 225-residue protein sequence, read N- to C-terminus: Thymidine kinase (225 aa).

ATP is bound at residue 8–15 (GPMFSGKT). Glutamate 92 acts as the Proton acceptor in catalysis. A substrate-binding site is contributed by tyrosine 122. Residues cysteine 147 and cysteine 150 each coordinate Zn(2+). 167–171 (KILVG) is a substrate binding site. Zn(2+) contacts are provided by cysteine 180 and cysteine 183. A compositionally biased stretch (polar residues) spans 197–207 (SEQINNQTELS). The interval 197–225 (SEQINNQTELSEPTRQKESLKIKKRRIDS) is disordered. Residues 208 to 225 (EPTRQKESLKIKKRRIDS) show a composition bias toward basic and acidic residues.

It belongs to the thymidine kinase family.

The enzyme catalyses thymidine + ATP = dTMP + ADP + H(+). This chain is Thymidine kinase (TK), found in Acanthamoeba polyphaga mimivirus (APMV).